Here is a 359-residue protein sequence, read N- to C-terminus: Peptide chain release factor 1 (359 aa).

Gln232 carries the post-translational modification N5-methylglutamine.

Belongs to the prokaryotic/mitochondrial release factor family. In terms of processing, methylated by PrmC. Methylation increases the termination efficiency of RF1.

The protein resides in the cytoplasm. Its function is as follows. Peptide chain release factor 1 directs the termination of translation in response to the peptide chain termination codons UAG and UAA. This chain is Peptide chain release factor 1, found in Lawsonia intracellularis (strain PHE/MN1-00).